The primary structure comprises 284 residues: Shikimate dehydrogenase (NADP(+)) (284 aa).

Residues 20–22 (SIS) and Ser-67 contribute to the shikimate site. Lys-71 serves as the catalytic Proton acceptor. Asp-83 is a binding site for NADP(+). The shikimate site is built by Asn-92 and Asp-107. Residues 129-133 (GAGGA) and Ile-227 each bind NADP(+). Shikimate is bound at residue Tyr-229. NADP(+) is bound at residue Gly-250.

The protein belongs to the shikimate dehydrogenase family. Homodimer.

It carries out the reaction shikimate + NADP(+) = 3-dehydroshikimate + NADPH + H(+). It functions in the pathway metabolic intermediate biosynthesis; chorismate biosynthesis; chorismate from D-erythrose 4-phosphate and phosphoenolpyruvate: step 4/7. In terms of biological role, involved in the biosynthesis of the chorismate, which leads to the biosynthesis of aromatic amino acids. Catalyzes the reversible NADPH linked reduction of 3-dehydroshikimate (DHSA) to yield shikimate (SA). The polypeptide is Shikimate dehydrogenase (NADP(+)) (Streptococcus pneumoniae (strain 70585)).